The chain runs to 118 residues: Large ribosomal subunit protein uL18 (118 aa).

The segment at 1 to 25 (MISKPDKNKLRQKRHRRVRGKLSGT) is disordered. The span at 10-20 (LRQKRHRRVRG) shows a compositional bias: basic residues.

It belongs to the universal ribosomal protein uL18 family. As to quaternary structure, part of the 50S ribosomal subunit; part of the 5S rRNA/L5/L18/L25 subcomplex. Contacts the 5S and 23S rRNAs.

Its function is as follows. This is one of the proteins that bind and probably mediate the attachment of the 5S RNA into the large ribosomal subunit, where it forms part of the central protuberance. The sequence is that of Large ribosomal subunit protein uL18 from Streptococcus pneumoniae (strain Hungary19A-6).